The chain runs to 112 residues: Transmembrane protein 14 homolog (112 aa).

A run of 4 helical transmembrane segments spans residues 9–26 (FKLN…GVIG), 36–53 (LIAG…AYYL), 60–77 (VGLG…GVMG), and 87–109 (IPII…LYNI).

It belongs to the TMEM14 family.

Its subcellular location is the membrane. The chain is Transmembrane protein 14 homolog from Dictyostelium discoideum (Social amoeba).